The primary structure comprises 155 residues: MLSPKRVKFRKQQRGRMRGVATRGNTIAFGQFALQAQECGWITSRQIEASRRAMTRYVKRGGKIWIRIFPDKPVTMRPAETRMGSGKGNPEFWVAVIKPGRILFEMGGEEITPEIAKEAMRLAQYKLPLKTKFICLDEQEQPAGTKAAASSTVES.

Belongs to the universal ribosomal protein uL16 family. As to quaternary structure, part of the 50S ribosomal subunit.

Binds 23S rRNA and is also seen to make contacts with the A and possibly P site tRNAs. In Synechococcus sp. (strain CC9311), this protein is Large ribosomal subunit protein uL16.